We begin with the raw amino-acid sequence, 124 residues long: U33-theraphotoxin-Cg1a (124 aa).

Residues 1 to 17 (MKFAVAIAFTLLVCVFA) form the signal peptide. 5 disulfide bridges follow: C26/C37, C31/C51, C36/C75, C61/C83, and C77/C94. Residues 93–108 (RCQEESGKSDKSKESQ) show a composition bias toward basic and acidic residues. Positions 93–124 (RCQEESGKSDKSKESQGSDESEESEESKESCG) are disordered. Over residues 109 to 118 (GSDESEESEE) the composition is skewed to acidic residues.

The protein belongs to the neurotoxin 32 family. In terms of tissue distribution, expressed by the venom gland.

The protein localises to the secreted. The polypeptide is U33-theraphotoxin-Cg1a (Chilobrachys guangxiensis (Chinese earth tiger tarantula)).